Reading from the N-terminus, the 448-residue chain is Proline iminopeptidase aneH (448 aa).

One can recognise an AB hydrolase-1 domain in the interval 64-191 (PWMLYLQGGP…VEVFIGGGPC (128 aa)). Residue S164 is the Nucleophile of the active site. D397 is a catalytic residue. Residue H425 is the Proton donor of the active site.

This sequence belongs to the peptidase S33 family. Homooligomer.

The protein resides in the cytoplasm. It catalyses the reaction Release of N-terminal proline from a peptide.. It participates in secondary metabolite biosynthesis. In terms of biological role, proline iminopeptidase; part of the gene cluster that mediates the biosynthesis of aculenes, a unique type of norsesquiterpenes that contain a nordaucane skeleton linked to an L-proline moiety and are of mixed biosynthetic origin. The pathway begins with the synthesis of dauca-4,7-diene by the terpene cyclase aneC using farnesyl pyrophosphate (FPP) as substrate. The cytochrome P450 monooxygenase aneF then performs the initial oxidation at C-12 of dauca-4,7-diene to yield asperaculane D. Asperaculane D is substrate of the cytochrome P450 monooxygenase aneD for C-10 hydroxylation to yield asperaculane E. The cytochrome P450 monooxygenase aneG then converts asperaculane E into aculene D via C-2 oxidation. The monomodular nonribosomal peptide synthtase aneB adenylates L-proline and the thiohydrolase aneE transfers this activated L-proline derivative to aculenes D and C to produce respectively aculenes B and A. The dioxygenase aneA converts aculene D into aculene C, and aculene B into aculene A by introducing the 5,6-alkene moiety. Asperculanes A, B, C and F, as well as 14-prolyl asperculane C, might be shunt products of the pathway. This Aspergillus aculeatus (strain ATCC 16872 / CBS 172.66 / WB 5094) protein is Proline iminopeptidase aneH.